Here is a 103-residue protein sequence, read N- to C-terminus: Small ribosomal subunit protein uS10 (103 aa).

It belongs to the universal ribosomal protein uS10 family. As to quaternary structure, part of the 30S ribosomal subunit.

Functionally, involved in the binding of tRNA to the ribosomes. The chain is Small ribosomal subunit protein uS10 from Neorickettsia sennetsu (strain ATCC VR-367 / Miyayama) (Ehrlichia sennetsu).